Reading from the N-terminus, the 399-residue chain is Acetate kinase (399 aa).

Asn7 serves as a coordination point for Mg(2+). Position 14 (Lys14) interacts with ATP. Arg91 is a binding site for substrate. Asp148 functions as the Proton donor/acceptor in the catalytic mechanism. Residues 208–212, 283–285, and 331–335 contribute to the ATP site; these read HIGNG, DMR, and GVGEN. Glu385 provides a ligand contact to Mg(2+).

This sequence belongs to the acetokinase family. In terms of assembly, homodimer. Requires Mg(2+) as cofactor. Mn(2+) is required as a cofactor.

The protein resides in the cytoplasm. The catalysed reaction is acetate + ATP = acetyl phosphate + ADP. It functions in the pathway metabolic intermediate biosynthesis; acetyl-CoA biosynthesis; acetyl-CoA from acetate: step 1/2. Functionally, catalyzes the formation of acetyl phosphate from acetate and ATP. Can also catalyze the reverse reaction. The polypeptide is Acetate kinase (Bacteroides thetaiotaomicron (strain ATCC 29148 / DSM 2079 / JCM 5827 / CCUG 10774 / NCTC 10582 / VPI-5482 / E50)).